The sequence spans 187 residues: Calcium and integrin-binding family member 3 (187 aa).

EF-hand domains follow at residues 66–101 (KDNPFRQRIAQVFSEDGDGHMTLDNFLDMFSVMSEM), 103–138 (PRDLKAYYAFKIYDFNNDDYICAWDLEQTVTKLTRG), and 144–179 (EVSLVCEKVLDEADGDHDGRLSLEDFQNMILRAPDF). The Ca(2+) site is built by Asp116, Asn118, Asp120, Tyr122, Asp127, Asp157, Asp159, Asp161, Arg163, and Asp168.

In terms of assembly, monomer and homodimer. Interacts with ITGA2B (via C-terminus cytoplasmic tail region); the interaction is stabilized/increased in a calcium and magnesium-dependent manner. Interacts with TMC1.

Acts a an auxiliary subunit of the sensory mechanoelectrical transduction (MET) channel in hair cells. Plays a role in regulating hair cell MET channel localization and function. The polypeptide is Calcium and integrin-binding family member 3 (CIB3) (Homo sapiens (Human)).